Reading from the N-terminus, the 300-residue chain is HTH-type transcriptional activator NahR (300 aa).

The 58-residue stretch at 6 to 63 (LDLNLLVVFNQLLVDRRVSITAENLGLTQPAVSNALKRLRTSLQDPLFVRTHQGMEPT) folds into the HTH lysR-type domain. The H-T-H motif DNA-binding region spans 23–42 (VSITAENLGLTQPAVSNALK).

The protein belongs to the LysR transcriptional regulatory family.

Its subcellular location is the cytoplasm. Functionally, regulates the expression of the naphthalene (nahA-F) and salicylate (nahG-M) metabolism genes. This chain is HTH-type transcriptional activator NahR (nahR), found in Pseudomonas putida (Arthrobacter siderocapsulatus).